We begin with the raw amino-acid sequence, 507 residues long: Dolichyl pyrophosphate Man9GlcNAc2 alpha-1,3-glucosyltransferase (507 aa).

Residues 1–3 (MEK) are Cytoplasmic-facing. Residues 4 to 24 (WYLMTVVVLIGLTVRWTVSLN) form a helical membrane-spanning segment. Topologically, residues 25 to 114 (SYSGAGKPPM…SQAHKLFMRT (90 aa)) are lumenal. Asparagine 59 carries an N-linked (GlcNAc...) asparagine glycan. The helical transmembrane segment at 115–135 (TVLIADLLIYIPAVVLYCCCL) threads the bilayer. Over 136 to 143 (KEISTKKK) the chain is Cytoplasmic. Residues 144–164 (IANALCILLYPGLILIDYGHF) traverse the membrane as a helical segment. Residues 165 to 172 (QYNSVSLG) lie on the Lumenal side of the membrane. The chain crosses the membrane as a helical span at residues 173–193 (FALWGVLGISCDCDLLGSLAF). At 194–226 (CLAINYKQMELYHALPFFCFLLGKCFKKGLKGK) the chain is on the cytoplasmic side. Residues 227 to 247 (GFVLLVKLACIVVASFVLCWL) traverse the membrane as a helical segment. Topologically, residues 248-297 (PFFTEREQTLQVLRRLFPVDRGLFEDKVANIWCSFNVFLKIKDILPRHIQ) are lumenal. The chain crosses the membrane as a helical span at residues 298–318 (LIMSFCFTFLSLLPACIKLIL). The Cytoplasmic segment spans residues 319–323 (QPSSK). A helical membrane pass occupies residues 324 to 344 (GFKFTLVSCALSFFLFSFQVH). Residues 345–361 (EKSILLVSLPVCLVLSE) are Lumenal-facing. The chain crosses the membrane as a helical span at residues 362–382 (IPFMSTWFLLVSTFSMLPLLL). Residues 383 to 387 (KDELL) lie on the Cytoplasmic side of the membrane. A helical membrane pass occupies residues 388–408 (MPSVVTTMAFFIACVTSFSIF). The Lumenal portion of the chain corresponds to 409–437 (EKTSEEELQLKSFSISVRKYLPCFTFLSR). A helical transmembrane segment spans residues 438-458 (IIQYLFLISVITMVLLTLMTV). Residues 459 to 473 (TLGPPQKLPDLFSVL) lie on the Cytoplasmic side of the membrane. The chain crosses the membrane as a helical span at residues 474–494 (VCFVSCLNFLFFLVYFNIIIV). Over 495–507 (WDSKSGRNQKKIS) the chain is Lumenal.

It belongs to the ALG6/ALG8 glucosyltransferase family.

Its subcellular location is the endoplasmic reticulum membrane. The catalysed reaction is an alpha-D-Man-(1-&gt;2)-alpha-D-Man-(1-&gt;2)-alpha-D-Man-(1-&gt;3)-[alpha-D-Man-(1-&gt;2)-alpha-D-Man-(1-&gt;3)-[alpha-D-Man-(1-&gt;2)-alpha-D-Man-(1-&gt;6)]-alpha-D-Man-(1-&gt;6)]-beta-D-Man-(1-&gt;4)-beta-D-GlcNAc-(1-&gt;4)-alpha-D-GlcNAc-diphospho-di-trans,poly-cis-dolichol + a di-trans,poly-cis-dolichyl beta-D-glucosyl phosphate = an alpha-D-Glc-(1-&gt;3)-alpha-D-Man-(1-&gt;2)-alpha-D-Man-(1-&gt;2)-alpha-D-Man-(1-&gt;3)-[alpha-D-Man-(1-&gt;2)-alpha-D-Man-(1-&gt;3)-[alpha-D-Man-(1-&gt;2)-alpha-D-Man-(1-&gt;6)]-alpha-D-Man-(1-&gt;6)]-beta-D-Man-(1-&gt;4)-beta-D-GlcNAc-(1-&gt;4)-alpha-D-GlcNAc-diphospho-di-trans,poly-cis-dolichol + a di-trans,poly-cis-dolichyl phosphate + H(+). Its pathway is protein modification; protein glycosylation. In terms of biological role, dolichyl pyrophosphate Man9GlcNAc2 alpha-1,3-glucosyltransferase that operates in the biosynthetic pathway of dolichol-linked oligosaccharides, the glycan precursors employed in protein asparagine (N)-glycosylation. The assembly of dolichol-linked oligosaccharides begins on the cytosolic side of the endoplasmic reticulum membrane and finishes in its lumen. The sequential addition of sugars to dolichol pyrophosphate produces dolichol-linked oligosaccharides containing fourteen sugars, including two GlcNAcs, nine mannoses and three glucoses. Once assembled, the oligosaccharide is transferred from the lipid to nascent proteins by oligosaccharyltransferases. In the lumen of the endoplasmic reticulum, adds the first glucose residue from dolichyl phosphate glucose (Dol-P-Glc) onto the lipid-linked oligosaccharide intermediate Man(9)GlcNAc(2)-PP-Dol to produce Glc(1)Man(9)GlcNAc(2)-PP-Dol. Glc(1)Man(9)GlcNAc(2)-PP-Dol is a substrate for ALG8, the following enzyme in the biosynthetic pathway. The protein is Dolichyl pyrophosphate Man9GlcNAc2 alpha-1,3-glucosyltransferase of Pongo abelii (Sumatran orangutan).